Here is a 356-residue protein sequence, read N- to C-terminus: tRNA N6-adenosine threonylcarbamoyltransferase (356 aa).

Fe cation contacts are provided by histidine 115 and histidine 119. Substrate-binding positions include 138–142, aspartate 171, glycine 184, and asparagine 283; that span reads LVSGG. A Fe cation-binding site is contributed by aspartate 311.

This sequence belongs to the KAE1 / TsaD family. It depends on Fe(2+) as a cofactor.

The protein localises to the cytoplasm. The catalysed reaction is L-threonylcarbamoyladenylate + adenosine(37) in tRNA = N(6)-L-threonylcarbamoyladenosine(37) in tRNA + AMP + H(+). In terms of biological role, required for the formation of a threonylcarbamoyl group on adenosine at position 37 (t(6)A37) in tRNAs that read codons beginning with adenine. Is involved in the transfer of the threonylcarbamoyl moiety of threonylcarbamoyl-AMP (TC-AMP) to the N6 group of A37, together with TsaE and TsaB. TsaD likely plays a direct catalytic role in this reaction. This chain is tRNA N6-adenosine threonylcarbamoyltransferase, found in Prochlorococcus marinus (strain MIT 9313).